A 197-amino-acid polypeptide reads, in one-letter code: Probable chorismate pyruvate-lyase (197 aa).

3 residues coordinate substrate: Arg77, Leu115, and Glu176.

Belongs to the UbiC family.

The protein resides in the cytoplasm. The catalysed reaction is chorismate = 4-hydroxybenzoate + pyruvate. It functions in the pathway cofactor biosynthesis; ubiquinone biosynthesis. In terms of biological role, removes the pyruvyl group from chorismate, with concomitant aromatization of the ring, to provide 4-hydroxybenzoate (4HB) for the ubiquinone pathway. The protein is Probable chorismate pyruvate-lyase of Burkholderia ambifaria (strain ATCC BAA-244 / DSM 16087 / CCUG 44356 / LMG 19182 / AMMD) (Burkholderia cepacia (strain AMMD)).